Consider the following 1070-residue polypeptide: DNA-directed RNA polymerase subunit beta (1070 aa).

The protein belongs to the RNA polymerase beta chain family. In terms of assembly, in plastids the minimal PEP RNA polymerase catalytic core is composed of four subunits: alpha, beta, beta', and beta''. When a (nuclear-encoded) sigma factor is associated with the core the holoenzyme is formed, which can initiate transcription.

It is found in the plastid. The protein localises to the chloroplast. The enzyme catalyses RNA(n) + a ribonucleoside 5'-triphosphate = RNA(n+1) + diphosphate. Functionally, DNA-dependent RNA polymerase catalyzes the transcription of DNA into RNA using the four ribonucleoside triphosphates as substrates. This is DNA-directed RNA polymerase subunit beta from Gossypium barbadense (Sea Island cotton).